A 199-amino-acid chain; its full sequence is MASPKGFFNYLTYFLAAGAVTLGIGFFALASALWFLICKRREIFQNSKFKAIDERCRQRPSMAKIKSHSQCVFISRNFHTGRFQLQEEQRKKEAAHIKAIKDHSKDEPQLATKNIICDPSETSSTTNRSSVTLSLSTLPSDSYYSQSIEAADDWFSDDSLVKRNSPMPSLGEPLMEKVFSYLSTISLEEGTESVLNDTL.

Residues 17–37 (AGAVTLGIGFFALASALWFLI) traverse the membrane as a helical segment.

It is found in the membrane. This is an uncharacterized protein from Homo sapiens (Human).